We begin with the raw amino-acid sequence, 336 residues long: Glycerol-3-phosphate dehydrogenase [NAD(P)+] (336 aa).

Residues S16, Y17, H37, and K111 each contribute to the NADPH site. Positions 111, 140, and 142 each coordinate sn-glycerol 3-phosphate. Residue A144 participates in NADPH binding. Sn-glycerol 3-phosphate is bound by residues K196, D249, S259, R260, and N261. K196 serves as the catalytic Proton acceptor. R260 is a binding site for NADPH. V284 and E286 together coordinate NADPH.

This sequence belongs to the NAD-dependent glycerol-3-phosphate dehydrogenase family.

It is found in the cytoplasm. The catalysed reaction is sn-glycerol 3-phosphate + NAD(+) = dihydroxyacetone phosphate + NADH + H(+). It carries out the reaction sn-glycerol 3-phosphate + NADP(+) = dihydroxyacetone phosphate + NADPH + H(+). The protein operates within membrane lipid metabolism; glycerophospholipid metabolism. Its function is as follows. Catalyzes the reduction of the glycolytic intermediate dihydroxyacetone phosphate (DHAP) to sn-glycerol 3-phosphate (G3P), the key precursor for phospholipid synthesis. The sequence is that of Glycerol-3-phosphate dehydrogenase [NAD(P)+] from Glaesserella parasuis serovar 5 (strain SH0165) (Haemophilus parasuis).